The chain runs to 1462 residues: Iron-sulfur cluster assembly protein SufD (1462 aa).

Disordered stretches follow at residues isoleucine 500–tyrosine 525, asparagine 938–glutamine 970, and asparagine 1111–glutamate 1153. The span at asparagine 510 to asparagine 523 shows a compositional bias: low complexity. A compositionally biased stretch (basic and acidic residues) spans histidine 961–glutamine 970. Positions asparagine 1111 to asparagine 1136 are enriched in low complexity.

It belongs to the iron-sulfur cluster assembly SufBD family. As to quaternary structure, component of a complex composed of SufB, SufC and SufD in a stoichiometric ratio of 1:2:1. Interacts with SufB. Interacts with SufC; the interaction enhances the ATPase activity of SufC. In terms of processing, proteolytically cleaved.

Its subcellular location is the plastid. The protein localises to the apicoplast. The protein operates within cofactor biosynthesis; iron-sulfur cluster biosynthesis. In terms of biological role, participates in the sulfur mobilization (SUF) pathway for iron-sulfur (Fe-S) cluster biogenesis. As part of a complex consisting of SufB-SufC(2)-SufD, involved in assembly of [4Fe-4S] clusters. Enhances the ATPase activity of SufC. The protein is Iron-sulfur cluster assembly protein SufD of Plasmodium falciparum (isolate 3D7).